A 444-amino-acid polypeptide reads, in one-letter code: Ribosomal protein uS12 methylthiotransferase RimO (444 aa).

The region spanning L2–E118 is the MTTase N-terminal domain. [4Fe-4S] cluster is bound by residues C11, C47, C81, C155, C159, and C162. A Radical SAM core domain is found at S141 to E371. A TRAM domain is found at D374–Y441.

This sequence belongs to the methylthiotransferase family. RimO subfamily. [4Fe-4S] cluster serves as cofactor.

It is found in the cytoplasm. The catalysed reaction is L-aspartate(89)-[ribosomal protein uS12]-hydrogen + (sulfur carrier)-SH + AH2 + 2 S-adenosyl-L-methionine = 3-methylsulfanyl-L-aspartate(89)-[ribosomal protein uS12]-hydrogen + (sulfur carrier)-H + 5'-deoxyadenosine + L-methionine + A + S-adenosyl-L-homocysteine + 2 H(+). Catalyzes the methylthiolation of an aspartic acid residue of ribosomal protein uS12. This Clostridioides difficile (strain 630) (Peptoclostridium difficile) protein is Ribosomal protein uS12 methylthiotransferase RimO.